The chain runs to 530 residues: MHQRILILDYGSQVTQLIARRVREAGVYSEIHAGDVDDAFVRDQVAQGLKGIILSGSHASAYEEGSMRVPAAVFEVGVPVLGICYGMQSMAQQLGGTVSFSDHREFGYAEVRAHGHTKLLDGLADFTTDEGHGMLKVWMSHGDKVTELPPGFKLMASTASCPIAGMADEDRGFYAVQFHPEVTHTVQGKAMLARFVKDICGCEGDWNMPDYISEAVARIREQVGSDEVILGLSGGVDSSVAAALIHRAIGDQLTCVFVDHGLLRLDEGKQVMQTFAENMGVKIVHVDATSQFMGKLTGVADPEAKRKIIGREFVEVFQDEAGKLQGAKWLAQGTIYPDVIESAGAKTGKATSIKSHHNVGGLPDTLNLQLLEPLRELFKDEVRELGVALGLPPQMVYRHPFPGPGLGVRILGEVKHEYAELLRRADAIFIEELRNAKDPASGLTWYELTSQAFAVFLPVKSVGVMGDGRTYEYVVALRAVQTFDFMTADWAPLPHPLLARVSSRIINEVRGINRVVYDVSSKPPATIEWE.

Residues 4 to 205 (RILILDYGSQ…VKDICGCEGD (202 aa)) form the Glutamine amidotransferase type-1 domain. Catalysis depends on Cys-84, which acts as the Nucleophile. Catalysis depends on residues His-179 and Glu-181. In terms of domain architecture, GMPS ATP-PPase spans 206–398 (WNMPDYISEA…LGLPPQMVYR (193 aa)). 233-239 (SGGVDSS) is an ATP binding site.

In terms of assembly, homodimer.

The catalysed reaction is XMP + L-glutamine + ATP + H2O = GMP + L-glutamate + AMP + diphosphate + 2 H(+). It functions in the pathway purine metabolism; GMP biosynthesis; GMP from XMP (L-Gln route): step 1/1. In terms of biological role, catalyzes the synthesis of GMP from XMP. In Bordetella bronchiseptica (strain ATCC BAA-588 / NCTC 13252 / RB50) (Alcaligenes bronchisepticus), this protein is GMP synthase [glutamine-hydrolyzing].